We begin with the raw amino-acid sequence, 372 residues long: Probable arabinan endo-1,5-alpha-L-arabinosidase B (372 aa).

The signal sequence occupies residues 1-16 (MTVLVALFCLVTWTLC). The span at 23 to 34 (STQGTQQPQQPE) shows a compositional bias: low complexity. The tract at residues 23–52 (STQGTQQPQQPEKTPHPHPQPEDAFPPTHA) is disordered. Catalysis depends on aspartate 59, which acts as the Proton acceptor. Asparagine 120 is a glycosylation site (N-linked (GlcNAc...) asparagine). Residue glutamate 252 is the Proton donor of the active site. N-linked (GlcNAc...) asparagine glycosylation occurs at asparagine 363.

This sequence belongs to the glycosyl hydrolase 43 family.

It is found in the secreted. The catalysed reaction is Endohydrolysis of (1-&gt;5)-alpha-arabinofuranosidic linkages in (1-&gt;5)-arabinans.. It participates in glycan metabolism; L-arabinan degradation. In terms of biological role, endo-1,5-alpha-L-arabinanase involved in degradation of pectin. Its preferred substrate is linear 1,5-alpha-L-arabinan. The polypeptide is Probable arabinan endo-1,5-alpha-L-arabinosidase B (abnB) (Aspergillus fumigatus (strain ATCC MYA-4609 / CBS 101355 / FGSC A1100 / Af293) (Neosartorya fumigata)).